A 78-amino-acid chain; its full sequence is Large ribosomal subunit protein bL28 (78 aa).

Residues 1-22 (MSKVCQVTGKRPTTGNNVSHAN) form a disordered region. Over residues 11–22 (RPTTGNNVSHAN) the composition is skewed to polar residues.

Belongs to the bacterial ribosomal protein bL28 family.

This Alkalilimnicola ehrlichii (strain ATCC BAA-1101 / DSM 17681 / MLHE-1) protein is Large ribosomal subunit protein bL28.